The sequence spans 846 residues: Protein arginine N-methyltransferase 9 (846 aa).

TPR repeat units follow at residues 25–58 (VARSLQSAEHCLGDQDFGTAYAHYLLVLSLAPEL), 67–100 (QYTLFKWAEELHALSRIQDLLGCYEQALELFPDD), and 101–134 (EVICNSMGEHLFRMGFRDEAAGYFHKAVKLNPDF). SAM-dependent MTase PRMT-type domains lie at 137 to 466 (AKEN…YLRI) and 530 to 846 (NIPY…AVKP).

This sequence belongs to the class I-like SAM-binding methyltransferase superfamily. Protein arginine N-methyltransferase family. Found in a complex with PRMT9, SF3B2 and SF3B4. Interacts with SF3B2.

It localises to the cytoplasm. It carries out the reaction L-arginyl-[protein] + 2 S-adenosyl-L-methionine = N(omega),N(omega)'-dimethyl-L-arginyl-[protein] + 2 S-adenosyl-L-homocysteine + 2 H(+). Arginine methyltransferase that can both catalyze the formation of omega-N monomethylarginine (MMA) and symmetrical dimethylarginine (sDMA). Specifically mediates the symmetrical dimethylation of SF3B2. Involved in the regulation of alternative splicing of pre-mRNA. This chain is Protein arginine N-methyltransferase 9 (Prmt9), found in Mus musculus (Mouse).